We begin with the raw amino-acid sequence, 318 residues long: Putative olfactory receptor 2W6 (318 aa).

The Extracellular portion of the chain corresponds to 1-31; it reads MGFYHVGQAAFELLTSSFILVGFSDRPHLEL. Residues 32-52 form a helical membrane-spanning segment; the sequence is IVFVVVLIFYLLTLLGNMTIV. Residues 53–63 lie on the Cytoplasmic side of the membrane; the sequence is LLSALDSRLHT. A helical membrane pass occupies residues 64 to 84; that stretch reads PMYFFLANLSFLDMCFTTGSI. Topologically, residues 85-103 are extracellular; sequence PQMLYNLWGPDKTISYVGC. C103 and C185 are oxidised to a cystine. The chain crosses the membrane as a helical span at residues 104-124; the sequence is AIQLYFVLALGGVECVLLAVM. The Cytoplasmic portion of the chain corresponds to 125-145; it reads AYDRYAAVCKPLHYTIIMHPR. The chain crosses the membrane as a helical span at residues 146-166; sequence LCGQLASVAWLSGFGNSLIMA. The Extracellular portion of the chain corresponds to 167 to 202; it reads PQTLMLPRCGHRRVDHFLCEMPALIGMACVDTMMLE. The helical transmembrane segment at 203–223 threads the bilayer; it reads ALAFALAIFIILAPLILILIS. The Cytoplasmic segment spans residues 224 to 245; sequence YGYVGGTVLRIKSAAGRKKAFN. Residues 246–266 form a helical membrane-spanning segment; the sequence is TCSSHLIVVSLFYGTIIYMYL. Residues 267-277 lie on the Extracellular side of the membrane; the sequence is QPANTYSQDQG. Residues 278-298 form a helical membrane-spanning segment; sequence KFLTLFYTIVTPSVNPLIYTL. The Cytoplasmic segment spans residues 299-318; it reads RNKDVKEAMKKVLGKGSAEI.

Belongs to the G-protein coupled receptor 1 family.

The protein resides in the cell membrane. Its function is as follows. Odorant receptor. The chain is Putative olfactory receptor 2W6 (OR2W6P) from Homo sapiens (Human).